Consider the following 194-residue polypeptide: MPNWGGGAKCGACEKTVYHAEEIQCNGRSFHKTCFHCMACRKALDSTTVAAHESEIYCKVCYGRRYGPKGIGYGQGAGCLSTDTGEHLGLQFQQSPKQARSATTSSNPSKFAKFGESEKCPRCGKSVYAAEKVMGGGKPWHKTCFRCAICGKSLESTNVTDKDGELYCKVCYAKNFGPTGIGFGGLTHQVEKKD.

Residues 1–5 (MPNWG) form an interaction with TCAP region. Positions 10 to 61 (CGACEKTVYHAEEIQCNGRSFHKTCFHCMACRKALDSTTVAAHESEIYCKVC) constitute an LIM zinc-binding 1 domain. Residues 64–69 (RRYGPK) carry the Nuclear localization signal motif. The segment at 94–106 (QSPKQARSATTSS) is interaction with CLF2. Phosphoserine occurs at positions 95 and 153. In terms of domain architecture, LIM zinc-binding 2 spans 120–171 (CPRCGKSVYAAEKVMGGGKPWHKTCFRCAICGKSLESTNVTDKDGELYCKVC).

In terms of assembly, self-associates. Oligomeric in the cytoplasm and monomeric in the nucleus. Homooligomers preferentially form along the actin cytoskeleton. Interacts with TCAP, LDHD, MYOD1, MYOG, ACTN2, NRAP, MYF6. Interacts (via N-terminus) with GLRX3 (via C-terminus) and PPP3CA; GLRX3 and calcineurin compete for interaction with CSRP3. Interacts with CFL2; the stoichiometry influences F-actin depolymerization and possibly two molecules of CFL2 can interact with one molecule of CSRP3 resulting in the highest functional impact; the interaction is stronger with phosphorylated CFL2.

It localises to the nucleus. Its subcellular location is the cytoplasm. The protein localises to the cytoskeleton. It is found in the myofibril. The protein resides in the sarcomere. It localises to the z line. Positive regulator of myogenesis. Acts as a cofactor for myogenic bHLH transcription factors such as MYOD1, and probably MYOG and MYF6. Enhances the DNA-binding activity of the MYOD1:TCF3 isoform E47 complex and may promote formation of a functional MYOD1:TCF3 isoform E47:MEF2A complex involved in myogenesis. Plays a crucial and specific role in the organization of cytosolic structures in cardiomyocytes. Could play a role in mechanical stretch sensing. May be a scaffold protein that promotes the assembly of interacting proteins at Z-line structures. It is essential for calcineurin anchorage to the Z line. Required for stress-induced calcineurin-NFAT activation. The role in regulation of cytoskeleton dynamics by association with CFL2 is reported conflictingly. Proposed to contribute to the maintenance of muscle cell integrity through an actin-based mechanism. Can directly bind to actin filaments, cross-link actin filaments into bundles without polarity selectivity and protect them from dilution- and cofilin-mediated depolymerization; the function seems to involve its self-association. In vitro can inhibit PKC/PRKCA activity. Proposed to be involved in cardiac stress signaling by down-regulating excessive PKC/PRKCA signaling. This Bos taurus (Bovine) protein is Cysteine and glycine-rich protein 3 (CSRP3).